The chain runs to 388 residues: MSRSSYIFTSESVSEGHPDKVCDRISDTIVDLFLGKDPEARVACETLTTTNQIVLAGEVRCAAPIDDAEIEAAAREAVRDIGYEQDGFHWETATLQNFLHEQSVHIAQGVDASGDKDEGAGDQGIMFGYASDETPQLMPAPITYSHQILKRMAELRKSGARPEFEPDAKSQVTMRYENGVPAGVTSVVVSTQHKDGLTQDDIRELVRPVVQDVLPEGWFPPEEEFYVNPTGTFVIGGPDGDAGLTGRKIIVDTYGGAAPHGGGAFSGKDPTKVDRSAAYACRWLAKNVVAAELAKRCTIQVSYAIGVSKPLSLYVDLHGTGRVDEAKLEDALRQLADLSPRGIRTRLQLNKPIYARTAAYGHFGRTPTEDGGFSWERTDLADELRSLL.

His-17 is a binding site for ATP. Residue Asp-19 coordinates Mg(2+). Glu-45 contributes to the K(+) binding site. L-methionine-binding residues include Glu-58 and Gln-102. Residues 102–112 are flexible loop; it reads QSVHIAQGVDA. ATP is bound by residues 167–169, Asp-241, 247–248, Ala-264, and Lys-268; these read DAK and RK. Asp-241 contributes to the L-methionine binding site. Residue Lys-272 coordinates L-methionine.

It belongs to the AdoMet synthase family. Homotetramer; dimer of dimers. The cofactor is Mg(2+). K(+) serves as cofactor.

Its subcellular location is the cytoplasm. It carries out the reaction L-methionine + ATP + H2O = S-adenosyl-L-methionine + phosphate + diphosphate. The protein operates within amino-acid biosynthesis; S-adenosyl-L-methionine biosynthesis; S-adenosyl-L-methionine from L-methionine: step 1/1. In terms of biological role, catalyzes the formation of S-adenosylmethionine (AdoMet) from methionine and ATP. The overall synthetic reaction is composed of two sequential steps, AdoMet formation and the subsequent tripolyphosphate hydrolysis which occurs prior to release of AdoMet from the enzyme. In Maricaulis maris (strain MCS10) (Caulobacter maris), this protein is S-adenosylmethionine synthase.